Consider the following 892-residue polypeptide: MSEIDYKETLNMPKTDFEMRANLTTKEPLFREKWEKDNLYARVLEKNKNNTPFVLHDGPPYANGSIHIGHALNKILKDIIVRYKSMCGFYSPYVPGWDTHGLPIELKMLTDAKINYKVISPIELRKRASEYADIQIENQISQFKSLQLLTDFKKIYKTKEPKFEAAQLKLFKKMVLDGLVYKGLKPVYWSPSSQTALAEAEVEYHDVDSPSIYVALEIIDQNGSQKVKNGDKLVIWTTTPWTLLANAAVAIGENFVYCRVEHNNQGYIVAKELANKFIEISKLDNAQISVDFNANELIGIKYKSVLNDLVCPVVIGHHVSLESGTGLVHIAPLFGEDDFQIGTANSLEMIMHVEDDGVLNDAAGKYKGIFYEKANAQIFDKLTSKSALLAKGTIRHSYPHDWRTHKPILFRGTPQWFVSIDKIRQQLLNELESINTYPEWAKKRLVNMISERKDWTISRQRTWGVPIIIFYDKDGKPVINSAIFDYVIDLVEKYGTDIWWEKEADELLPEEFRSNGYTKEMDIMDVWFDSGTTSLAVEIDEKLKPPYDLYLEGSDQYRGWFNSSLINSVAYTHKSPYKQIVSHGFVLDSKGEKMSKSKGNVVDPLKVIKKYGADILRLWVANAEYTNDVNISDEIINQNSEIYRKIRNTIKFLLGNLNGYEYDESVKRTGVHQYIYNELESIKEKVYKAYDEYNFSSVIKTINKYVVELSSFYLNITKDILYVHEFDSNERMMTLANFYDITNFLIKAIAPIIPTTAEDAYMHFYKKNKLESIHLENFDIVKPYDSNVLKEWEEFFSLKDEVNLLLENAIKSGLIKRTNEAKVTIKNPSEVIKGYDLKQLLMVGAIEFGNVSKVESFMSEKCNRCWNHFSPAQIKDNLCPLCYKIVQKVNGK.

The short motif at 60 to 70 (PYANGSIHIGH) is the 'HIGH' region element. Glutamate 552 serves as a coordination point for L-isoleucyl-5'-AMP. The 'KMSKS' region motif lies at 593 to 597 (KMSKS). Lysine 596 is a binding site for ATP. Cysteine 862, cysteine 865, cysteine 879, and cysteine 882 together coordinate Zn(2+).

It belongs to the class-I aminoacyl-tRNA synthetase family. IleS type 1 subfamily. Monomer. Requires Zn(2+) as cofactor.

It localises to the cytoplasm. The enzyme catalyses tRNA(Ile) + L-isoleucine + ATP = L-isoleucyl-tRNA(Ile) + AMP + diphosphate. Its function is as follows. Catalyzes the attachment of isoleucine to tRNA(Ile). As IleRS can inadvertently accommodate and process structurally similar amino acids such as valine, to avoid such errors it has two additional distinct tRNA(Ile)-dependent editing activities. One activity is designated as 'pretransfer' editing and involves the hydrolysis of activated Val-AMP. The other activity is designated 'posttransfer' editing and involves deacylation of mischarged Val-tRNA(Ile). The sequence is that of Isoleucine--tRNA ligase from Mycoplasmopsis agalactiae (strain NCTC 10123 / CIP 59.7 / PG2) (Mycoplasma agalactiae).